We begin with the raw amino-acid sequence, 236 residues long: Baculoviral IAP repeat-containing protein 8 (236 aa).

Residues 7-70 (RLITFGTWMY…KWYPGCKYLL (64 aa)) form a BIR repeat. Zn(2+) contacts are provided by Cys-39, Cys-42, His-59, and Cys-66. The RING-type zinc finger occupies 189–224 (CKICMDRHIAVVFIPCGHLVTCKQCAEAVDRCPMCS).

Belongs to the IAP family. As to quaternary structure, binds to caspase-9.

It is found in the cytoplasm. In terms of biological role, protects against apoptosis mediated by BAX. The sequence is that of Baculoviral IAP repeat-containing protein 8 (BIRC8) from Pan troglodytes (Chimpanzee).